We begin with the raw amino-acid sequence, 407 residues long: Tryptophan synthase beta chain (407 aa).

The residue at position 91 (K91) is an N6-(pyridoxal phosphate)lysine.

It belongs to the TrpB family. In terms of assembly, tetramer of two alpha and two beta chains. Pyridoxal 5'-phosphate is required as a cofactor.

It catalyses the reaction (1S,2R)-1-C-(indol-3-yl)glycerol 3-phosphate + L-serine = D-glyceraldehyde 3-phosphate + L-tryptophan + H2O. Its pathway is amino-acid biosynthesis; L-tryptophan biosynthesis; L-tryptophan from chorismate: step 5/5. The beta subunit is responsible for the synthesis of L-tryptophan from indole and L-serine. In Streptococcus pneumoniae (strain 70585), this protein is Tryptophan synthase beta chain.